Consider the following 126-residue polypeptide: DNA-directed RNA polymerase subunit omega (126 aa).

The protein belongs to the RNA polymerase subunit omega family. In terms of assembly, the RNAP catalytic core consists of 2 alpha, 1 beta, 1 beta' and 1 omega subunit. When a sigma factor is associated with the core the holoenzyme is formed, which can initiate transcription.

The enzyme catalyses RNA(n) + a ribonucleoside 5'-triphosphate = RNA(n+1) + diphosphate. Its function is as follows. Promotes RNA polymerase assembly. Latches the N- and C-terminal regions of the beta' subunit thereby facilitating its interaction with the beta and alpha subunits. The chain is DNA-directed RNA polymerase subunit omega from Paramagnetospirillum magneticum (strain ATCC 700264 / AMB-1) (Magnetospirillum magneticum).